The following is a 334-amino-acid chain: Anthranilate phosphoribosyltransferase (334 aa).

5-phospho-alpha-D-ribose 1-diphosphate contacts are provided by residues Gly-81, 84-85 (GD), Thr-89, 91-94 (NIST), 109-117 (KHGNRSVSS), and Ala-121. An anthranilate-binding site is contributed by Gly-81. Residue Ser-93 participates in Mg(2+) binding. Asn-112 lines the anthranilate pocket. Anthranilate is bound at residue Arg-167. The Mg(2+) site is built by Asp-225 and Glu-226.

This sequence belongs to the anthranilate phosphoribosyltransferase family. Homodimer. Mg(2+) is required as a cofactor.

The enzyme catalyses N-(5-phospho-beta-D-ribosyl)anthranilate + diphosphate = 5-phospho-alpha-D-ribose 1-diphosphate + anthranilate. The protein operates within amino-acid biosynthesis; L-tryptophan biosynthesis; L-tryptophan from chorismate: step 2/5. Functionally, catalyzes the transfer of the phosphoribosyl group of 5-phosphorylribose-1-pyrophosphate (PRPP) to anthranilate to yield N-(5'-phosphoribosyl)-anthranilate (PRA). This is Anthranilate phosphoribosyltransferase from Histophilus somni (strain 2336) (Haemophilus somnus).